We begin with the raw amino-acid sequence, 316 residues long: dTDP-4-dehydro-6-deoxyglucose reductase (316 aa).

NAD(+) is bound at residue 16-17 (FI). Tyr151 (proton acceptor) is an active-site residue. Lys155 provides a ligand contact to NAD(+).

It belongs to the NAD(P)-dependent epimerase/dehydratase family.

The enzyme catalyses dTDP-alpha-D-fucose + NAD(+) = dTDP-4-dehydro-6-deoxy-alpha-D-glucose + NADH + H(+). It carries out the reaction dTDP-alpha-D-fucose + NADP(+) = dTDP-4-dehydro-6-deoxy-alpha-D-glucose + NADPH + H(+). The protein operates within bacterial outer membrane biogenesis; LPS O-antigen biosynthesis. Inhibited by Cu(2+), while other divalent cations such as Ca(2+), Co(2+), Fe(2+), Mn(2+) and Mg(2+) have no obvious effects on enzyme activity. Functionally, catalyzes the stereospecific reduction of the C-4 keto group of dTDP-4-dehydro-6-deoxy-D-glucose, leading to dTDP-D-fucopyranose. This is a step in the biosynthesis of D-fucofuranose, a component of E.coli O52 O antigen. Is more efficient using NADH than NADPH as cosubstrate. This Escherichia coli protein is dTDP-4-dehydro-6-deoxyglucose reductase (fcf1).